We begin with the raw amino-acid sequence, 77 residues long: Large ribosomal subunit protein eL20 (77 aa).

This sequence belongs to the eukaryotic ribosomal protein eL20 family. As to quaternary structure, part of the 50S ribosomal subunit. Binds 23S rRNA.

The sequence is that of Large ribosomal subunit protein eL20 from Thermococcus gammatolerans (strain DSM 15229 / JCM 11827 / EJ3).